A 185-amino-acid polypeptide reads, in one-letter code: Elongation factor P (185 aa).

The protein belongs to the elongation factor P family.

It is found in the cytoplasm. Its pathway is protein biosynthesis; polypeptide chain elongation. Its function is as follows. Involved in peptide bond synthesis. Stimulates efficient translation and peptide-bond synthesis on native or reconstituted 70S ribosomes in vitro. Probably functions indirectly by altering the affinity of the ribosome for aminoacyl-tRNA, thus increasing their reactivity as acceptors for peptidyl transferase. The protein is Elongation factor P of Paraburkholderia phytofirmans (strain DSM 17436 / LMG 22146 / PsJN) (Burkholderia phytofirmans).